The primary structure comprises 630 residues: Pro-interleukin-16 (630 aa).

2 disordered regions span residues 30 to 268 and 316 to 343; these read ENPG…FPLT and PKEGASPTSSSNEDSAANGSAETSASDT. Over residues 129 to 143 the composition is skewed to low complexity; it reads IRASSSSSIKQRISS. S220 carries the post-translational modification Phosphoserine. Positions 321-343 are enriched in polar residues; sequence SPTSSSNEDSAANGSAETSASDT. The segment at 404-500 is interaction with PPP1R12A, PPP1R12B and PPP1R12C; the sequence is KQLDSIHVTI…IVTRKLTAES (97 aa). PDZ domains lie at 410-495 and 532-617; these read HVTI…VTRK and TVTL…IRRK.

Homotetramer. Pro-interleukin-16 interacts (via PDZ 2 domain) with PPP1R12A, PPP1R12B and PPP1R12C. Pro-interleukin-16 interacts with GRIN2A. Pro-interleukin-16 interacts with GABPB1. Pro-interleukin-16 interacts (via PDZ 3 domain) with HDAC3.

The protein localises to the secreted. It is found in the cytoplasm. It localises to the nucleus. Interleukin-16 stimulates a migratory response in CD4+ lymphocytes, monocytes, and eosinophils. Primes CD4+ T-cells for IL-2 and IL-15 responsiveness. Also induces T-lymphocyte expression of interleukin 2 receptor. Ligand for CD4. Its function is as follows. Pro-interleukin-16 is involved in cell cycle progression in T-cells. Appears to be involved in transcriptional regulation of SKP2 and is probably part of a transcriptional repression complex on the core promoter of the SKP2 gene. May act as a scaffold for GABPB1 (the DNA-binding subunit the GABP transcription factor complex) and HDAC3 thus maintaining transcriptional repression and blocking cell cycle progression in resting T-cells. This is Pro-interleukin-16 (IL16) from Macaca mulatta (Rhesus macaque).